Here is a 278-residue protein sequence, read N- to C-terminus: Undecaprenyl-diphosphatase 2 (278 aa).

The next 7 membrane-spanning stretches (helical) occupy residues 1–21 (MSIIEAIIIGIVQGITEFLPI), 38–58 (FPGFGFEIFLHIASILAVILY), 85–105 (FMFAIYIIVATGITGVLGLLL), 118–138 (FIAGALIITGTFLIIIERFFV), 191–211 (SFLLSIPVILGTSVLAIGDLL), 223–243 (PLIISFIVTFFFSWLGIIWLI), and 251–271 (LIYFAFYCFALAIFVFFYFDH).

This sequence belongs to the UppP family.

The protein resides in the cell membrane. It catalyses the reaction di-trans,octa-cis-undecaprenyl diphosphate + H2O = di-trans,octa-cis-undecaprenyl phosphate + phosphate + H(+). Its function is as follows. Catalyzes the dephosphorylation of undecaprenyl diphosphate (UPP). Confers resistance to bacitracin. The protein is Undecaprenyl-diphosphatase 2 of Halalkalibacterium halodurans (strain ATCC BAA-125 / DSM 18197 / FERM 7344 / JCM 9153 / C-125) (Bacillus halodurans).